The following is a 310-amino-acid chain: Probable deoxyhypusine synthase (310 aa).

Lys284 (nucleophile) is an active-site residue.

It belongs to the deoxyhypusine synthase family. Requires NAD(+) as cofactor.

It carries out the reaction [eIF5A protein]-L-lysine + spermidine = [eIF5A protein]-deoxyhypusine + propane-1,3-diamine. It functions in the pathway protein modification; eIF5A hypusination. Catalyzes the NAD-dependent oxidative cleavage of spermidine and the subsequent transfer of the butylamine moiety of spermidine to the epsilon-amino group of a specific lysine residue of the eIF-5A precursor protein to form the intermediate deoxyhypusine residue. This Thermoplasma volcanium (strain ATCC 51530 / DSM 4299 / JCM 9571 / NBRC 15438 / GSS1) protein is Probable deoxyhypusine synthase (dys).